The following is a 185-amino-acid chain: Elongation factor P (185 aa).

It belongs to the elongation factor P family.

It is found in the cytoplasm. The protein operates within protein biosynthesis; polypeptide chain elongation. In terms of biological role, involved in peptide bond synthesis. Stimulates efficient translation and peptide-bond synthesis on native or reconstituted 70S ribosomes in vitro. Probably functions indirectly by altering the affinity of the ribosome for aminoacyl-tRNA, thus increasing their reactivity as acceptors for peptidyl transferase. This is Elongation factor P from Bacillus cereus (strain B4264).